A 358-amino-acid chain; its full sequence is 4-hydroxybenzoate polyprenyltransferase, mitochondrial (358 aa).

The N-terminal 20 residues, 1 to 20 (MIIKPIASPARYFLRTPSWS), are a transit peptide targeting the mitochondrion. Transmembrane regions (helical) follow at residues 76–96 (TGTY…AYAY), 107–127 (LALF…INDL), 154–174 (AISL…QLNP), 202–222 (VVLG…LAGE), 229–249 (VVAP…TIYA), 275–295 (VLCG…IMNG), and 336–356 (NTGY…SFIY).

Belongs to the UbiA prenyltransferase family. Mg(2+) serves as cofactor.

It is found in the mitochondrion. The protein localises to the mitochondrion inner membrane. The enzyme catalyses an all-trans-polyprenyl diphosphate + 4-hydroxybenzoate = a 4-hydroxy-3-(all-trans-polyprenyl)benzoate + diphosphate. Its pathway is cofactor biosynthesis; ubiquinone biosynthesis. In terms of biological role, catalyzes the prenylation of para-hydroxybenzoate (PHB) with an all-trans polyprenyl group. Mediates the second step in the final reaction sequence of coenzyme Q (CoQ) biosynthesis, which is the condensation of the polyisoprenoid side chain with PHB, generating the first membrane-bound Q intermediate. This is 4-hydroxybenzoate polyprenyltransferase, mitochondrial from Schizosaccharomyces pombe (strain 972 / ATCC 24843) (Fission yeast).